The chain runs to 398 residues: UDP-N-acetylglucosamine--N-acetylmuramyl-(pentapeptide) pyrophosphoryl-undecaprenol N-acetylglucosamine transferase (398 aa).

UDP-N-acetyl-alpha-D-glucosamine contacts are provided by residues 15–17 (TGG), Asn-125, Arg-168, Ser-196, and Gln-297.

Belongs to the glycosyltransferase 28 family. MurG subfamily.

It is found in the cell inner membrane. The catalysed reaction is di-trans,octa-cis-undecaprenyl diphospho-N-acetyl-alpha-D-muramoyl-L-alanyl-D-glutamyl-meso-2,6-diaminopimeloyl-D-alanyl-D-alanine + UDP-N-acetyl-alpha-D-glucosamine = di-trans,octa-cis-undecaprenyl diphospho-[N-acetyl-alpha-D-glucosaminyl-(1-&gt;4)]-N-acetyl-alpha-D-muramoyl-L-alanyl-D-glutamyl-meso-2,6-diaminopimeloyl-D-alanyl-D-alanine + UDP + H(+). The protein operates within cell wall biogenesis; peptidoglycan biosynthesis. Cell wall formation. Catalyzes the transfer of a GlcNAc subunit on undecaprenyl-pyrophosphoryl-MurNAc-pentapeptide (lipid intermediate I) to form undecaprenyl-pyrophosphoryl-MurNAc-(pentapeptide)GlcNAc (lipid intermediate II). In Erythrobacter litoralis (strain HTCC2594), this protein is UDP-N-acetylglucosamine--N-acetylmuramyl-(pentapeptide) pyrophosphoryl-undecaprenol N-acetylglucosamine transferase.